The chain runs to 197 residues: Protein-S-isoprenylcysteine O-methyltransferase B (197 aa).

3 consecutive transmembrane segments (helical) span residues 16–36, 52–72, and 81–101; these read MFLA…AIHG, ALAM…FPGL, and FGLT…ITAG. S-adenosyl-L-methionine contacts are provided by residues 116–119, Y124, and 129–132; these read HKLV and HPSY. A helical membrane pass occupies residues 140–160; it reads VGTQVMLCNPISAIAFAVVVW. R166 is a binding site for substrate. Residue E170 coordinates S-adenosyl-L-methionine.

Belongs to the class VI-like SAM-binding methyltransferase superfamily. Isoprenylcysteine carboxyl methyltransferase family. It depends on Zn(2+) as a cofactor. Expressed in flowers, stems, leaves, roots and siliques. Detected in apices and vascular tissues of leaves and roots, in the stigma and in the filaments and anthers of stamen. Not found in petioles or hypocotyls.

Its subcellular location is the endoplasmic reticulum membrane. The enzyme catalyses [protein]-C-terminal S-[(2E,6E)-farnesyl]-L-cysteine + S-adenosyl-L-methionine = [protein]-C-terminal S-[(2E,6E)-farnesyl]-L-cysteine methyl ester + S-adenosyl-L-homocysteine. With respect to regulation, inhibited by farnesylthioacetic acid (FTAA) and N-acetyl-S-trans, trans-farnesyl-l-cysteine (AFC). Functionally, catalyzes the post-translational methylation of isoprenylated C-terminal cysteine residues, resulting in the modulation of the function of prenylated proteins. Involved in negative regulation of abscisic acid signaling. Carboxyl methylation is a reversible and potentially regulated step in the post-translational modification of prenylated proteins. This chain is Protein-S-isoprenylcysteine O-methyltransferase B, found in Arabidopsis thaliana (Mouse-ear cress).